We begin with the raw amino-acid sequence, 336 residues long: MSAQVIAIDAMGGDFGPRSIVQASIACLSATPSLHLTLVGQPSLLEDLISGLPAADRARLQVVAASEVVGMDERPSQALRGKPDSSMRIALELVRDGKAQACVSAGNTGALMALSRFVLKTLPGIDRPAMVAAIPTQTGYCQLLDLGANVDCSAENLYQFAVMGSVAAQALGVHRPRVALLNIGTEDIKGNQQVKLAATLLQSARGLNYVGFVEGDGLYRGEADVVVCDGFVGNILLKSSEGLATMIGARIEKLFKGGAFARVAGAVAMPLLKRLQADLAPARHNGASFLGLQGIVIKSHGSAGVQGFQSAIQRALIEIQENLPQRLHGRLEDLLP.

This sequence belongs to the PlsX family. Homodimer. Probably interacts with PlsY.

The protein resides in the cytoplasm. The catalysed reaction is a fatty acyl-[ACP] + phosphate = an acyl phosphate + holo-[ACP]. The protein operates within lipid metabolism; phospholipid metabolism. In terms of biological role, catalyzes the reversible formation of acyl-phosphate (acyl-PO(4)) from acyl-[acyl-carrier-protein] (acyl-ACP). This enzyme utilizes acyl-ACP as fatty acyl donor, but not acyl-CoA. The polypeptide is Phosphate acyltransferase (Pseudomonas putida (strain ATCC 47054 / DSM 6125 / CFBP 8728 / NCIMB 11950 / KT2440)).